A 159-amino-acid polypeptide reads, in one-letter code: Crossover junction endodeoxyribonuclease RuvC (159 aa).

Residues aspartate 7, glutamate 67, and aspartate 139 contribute to the active site. Residues aspartate 7, glutamate 67, and aspartate 139 each coordinate Mg(2+).

The protein belongs to the RuvC family. Homodimer which binds Holliday junction (HJ) DNA. The HJ becomes 2-fold symmetrical on binding to RuvC with unstacked arms; it has a different conformation from HJ DNA in complex with RuvA. In the full resolvosome a probable DNA-RuvA(4)-RuvB(12)-RuvC(2) complex forms which resolves the HJ. Mg(2+) serves as cofactor.

It is found in the cytoplasm. It catalyses the reaction Endonucleolytic cleavage at a junction such as a reciprocal single-stranded crossover between two homologous DNA duplexes (Holliday junction).. Functionally, the RuvA-RuvB-RuvC complex processes Holliday junction (HJ) DNA during genetic recombination and DNA repair. Endonuclease that resolves HJ intermediates. Cleaves cruciform DNA by making single-stranded nicks across the HJ at symmetrical positions within the homologous arms, yielding a 5'-phosphate and a 3'-hydroxyl group; requires a central core of homology in the junction. The consensus cleavage sequence is 5'-(A/T)TT(C/G)-3'. Cleavage occurs on the 3'-side of the TT dinucleotide at the point of strand exchange. HJ branch migration catalyzed by RuvA-RuvB allows RuvC to scan DNA until it finds its consensus sequence, where it cleaves and resolves the cruciform DNA. This Orientia tsutsugamushi (strain Boryong) (Rickettsia tsutsugamushi) protein is Crossover junction endodeoxyribonuclease RuvC.